The sequence spans 220 residues: Nucleolar protein 12 (220 aa).

Residues 31–86 (HKRKMQRRKTAVEEIKRKIKEEQKKMKEERHKEYMKMLKEREEALCELEENDELEE) adopt a coiled-coil conformation. The segment at 109–220 (ISDLDLSGIR…QTGKTRRRRN (112 aa)) is disordered. Residues 139–148 (EKGADEEKPK) are compositionally biased toward basic and acidic residues. Composition is skewed to basic residues over residues 176-186 (RSQRKSGKRPS) and 205-220 (KTQRRKQTGKTRRRRN).

Belongs to the RRP17 family.

It localises to the nucleus. The protein localises to the nucleolus. Functionally, may bind to rRNA. The chain is Nucleolar protein 12 (nol12) from Xenopus laevis (African clawed frog).